The primary structure comprises 447 residues: Serine/threonine-protein phosphatase 2A 55 kDa regulatory subunit B alpha isoform (447 aa).

An N-acetylalanine modification is found at A2. WD repeat units follow at residues 11-80, 94-174, 175-218, 227-270, 288-325, 347-381, and 414-446; these read QWCF…FQSH, EKIN…IFAN, AHTY…VDIK, EVIT…KLFE, ISDVKFSHSGRYMMTRDYLSVKVWDLNMENRPVETYQV, ECCWNGSDSVVMTGSYNNFFRMFDRNTKRDITLEA, and DFNKKILHTAWHPKENIIAVATTNNLYIFQDKV.

It belongs to the phosphatase 2A regulatory subunit B family. As to quaternary structure, PP2A consists of a common heterodimeric core enzyme, composed of a 36 kDa catalytic subunit (subunit C) and a 65 kDa constant regulatory subunit (PR65 or subunit A), that associates with a variety of regulatory subunits. Proteins that associate with the core dimer include three families of regulatory subunits B (the R2/B/PR55/B55, R3/B''/PR72/PR130/PR59 and R5/B'/B56 families), the 48 kDa variable regulatory subunit, viral proteins, and cell signaling molecules. Interacts with the PP2A C catalytic subunit PPP2CA. Interacts with the PP2A A subunit PPP2R1A. Found in a complex with at least ARL2, PPP2CB, PPP2R1A, PPP2R2A, PPP2R5E and TBCD. Interacts with MFHAS1; the interaction is direct. Interacts with PABIR1/FAM122A (via its N-terminus); the interaction is direct and inhibits PP2A activity. Interacts with ARPP19; the interaction is direct and inhibits PP2A activity. Interacts with CRTC3. Brain.

In terms of biological role, substrate-recognition subunit of protein phosphatase 2A (PP2A) that plays a key role in cell cycle by controlling mitosis entry and exit. Involved in chromosome clustering during late mitosis by mediating dephosphorylation of MKI67. Essential for serine/threonine-protein phosphatase 2A-mediated dephosphorylation of WEE1, preventing its ubiquitin-mediated proteolysis, increasing WEE1 protein levels, and promoting the G2/M checkpoint. The protein is Serine/threonine-protein phosphatase 2A 55 kDa regulatory subunit B alpha isoform (Ppp2r2a) of Rattus norvegicus (Rat).